A 437-amino-acid chain; its full sequence is C-terminal-binding protein 2 (437 aa).

Residues serine 103, 183-188, aspartate 207, 240-246, 267-269, and aspartate 293 each bind NAD(+); these read IGLGRI, CNLNEHN, and TAR. The active site involves arginine 269. Glutamate 298 is an active-site residue. Histidine 318 (proton donor) is an active-site residue. 318 to 321 contributes to the NAD(+) binding site; that stretch reads HTAW. The segment at 410–437 is disordered; the sequence is PLIPSVSHTPSPGQTTKPDPDREIPTDQ. Over residues 415-426 the composition is skewed to polar residues; the sequence is VSHTPSPGQTTK. Residues 427 to 437 are compositionally biased toward basic and acidic residues; sequence PDPDREIPTDQ.

This sequence belongs to the D-isomer specific 2-hydroxyacid dehydrogenase family. Interacts with the C-terminus of tcf7l1-a via the consensus motifs P-X-[DNS]-L-[STVA].

The protein localises to the nucleus. Corepressor targeting diverse transcription regulators. The sequence is that of C-terminal-binding protein 2 (ctbp2) from Xenopus laevis (African clawed frog).